The sequence spans 31 residues: Photosystem II reaction center protein T (31 aa).

A helical membrane pass occupies residues 3-23 (ALVYTFLLVGTLGIIFFAIFF).

Belongs to the PsbT family. PSII is composed of 1 copy each of membrane proteins PsbA, PsbB, PsbC, PsbD, PsbE, PsbF, PsbH, PsbI, PsbJ, PsbK, PsbL, PsbM, PsbT, PsbY, PsbZ, Psb30/Ycf12, at least 3 peripheral proteins of the oxygen-evolving complex and a large number of cofactors. It forms dimeric complexes.

The protein resides in the plastid. It is found in the chloroplast thylakoid membrane. In terms of biological role, found at the monomer-monomer interface of the photosystem II (PS II) dimer, plays a role in assembly and dimerization of PSII. PSII is a light-driven water plastoquinone oxidoreductase, using light energy to abstract electrons from H(2)O, generating a proton gradient subsequently used for ATP formation. This chain is Photosystem II reaction center protein T, found in Mesostigma viride (Green alga).